We begin with the raw amino-acid sequence, 319 residues long: MATFEHTTVLLHEAIAALNVRPDGIYVDCTLGGGGHSREILQQLGLEGHLYSFDQDQTAIDYNQSNLATYLERGQVTFIKSNFANLKTELNARGLDHVDGVVYDLGVSSPQFDDAARGFSYQHDAPLDMRMDQSQKLTAQTVVNTWPYADLVRIFYRYGEEKFSKQVARLIERERAVQPIVTTGQLVEIIKNAIPARARRTGGHPAKRVFQAIRIAVNNELGVLETSLEQAIDLINVHGRVSVITFQSLEDRLVKTIFKEHSDLPELPPGLPVIPAEMQPDYRLVSRKPVVPSDAEIEANRRARSAKLRAIERLKITNK.

S-adenosyl-L-methionine contacts are provided by residues 34–36 (GGH), Asp-54, Phe-83, Asp-104, and Gln-111.

This sequence belongs to the methyltransferase superfamily. RsmH family.

Its subcellular location is the cytoplasm. It carries out the reaction cytidine(1402) in 16S rRNA + S-adenosyl-L-methionine = N(4)-methylcytidine(1402) in 16S rRNA + S-adenosyl-L-homocysteine + H(+). Its function is as follows. Specifically methylates the N4 position of cytidine in position 1402 (C1402) of 16S rRNA. In Lactiplantibacillus plantarum (strain ATCC BAA-793 / NCIMB 8826 / WCFS1) (Lactobacillus plantarum), this protein is Ribosomal RNA small subunit methyltransferase H.